A 379-amino-acid polypeptide reads, in one-letter code: Cobalt-precorrin-5B C(1)-methyltransferase (379 aa).

This sequence belongs to the CbiD family.

The catalysed reaction is Co-precorrin-5B + S-adenosyl-L-methionine = Co-precorrin-6A + S-adenosyl-L-homocysteine. The protein operates within cofactor biosynthesis; adenosylcobalamin biosynthesis; cob(II)yrinate a,c-diamide from sirohydrochlorin (anaerobic route): step 6/10. Catalyzes the methylation of C-1 in cobalt-precorrin-5B to form cobalt-precorrin-6A. The protein is Cobalt-precorrin-5B C(1)-methyltransferase of Salmonella choleraesuis (strain SC-B67).